The chain runs to 1486 residues: Homeobox protein cut-like 2 (1486 aa).

The segment at 114–167 (DRLQPPSFDPSGQPRRDLHTSWKRNPELLSPKEQREGTSPAGPTLTEGSRLPGI) is disordered. The segment covering 127-149 (PRRDLHTSWKRNPELLSPKEQRE) has biased composition (basic and acidic residues). Residue serine 143 is modified to Phosphoserine. The stretch at 195 to 374 (TLAARLGEAE…IKTELSILKA (180 aa)) forms a coiled coil. 6 disordered regions span residues 415–481 (LLAS…LSPF), 517–549 (PTAP…PGAE), 661–690 (EIES…STSE), 716–758 (VAPR…AQAP), 800–858 (YASV…EGAT), and 964–1032 (GQAV…SGSQ). The segment covering 419 to 428 (PEEDPSEDDS) has biased composition (acidic residues). Residues 443-460 (QQLPPPPGPEDPLSPSPG) show a composition bias toward pro residues. Over residues 461–470 (QPLLGPSLGP) the composition is skewed to low complexity. Pro residues predominate over residues 517-532 (PTAPATPAPGPEPLGG). A DNA-binding region (CUT 1) is located at residues 544-631 (AGPGAEEEQL…VLALRTIQVR (88 aa)). A compositionally biased stretch (polar residues) spans 680–690 (ANGTTPASTSE). Residues 690–717 (EDAIKSILEQARREMQAQQQALLEMEVA) adopt a coiled-coil conformation. Residues 802–816 (SVSPSLSSSSSSGYS) show a composition bias toward low complexity. Residues 834-844 (PEDEAAAGAED) are compositionally biased toward acidic residues. Basic and acidic residues predominate over residues 845–854 (EPPRTGELKA). The segment at residues 887 to 974 (QYELYMYREV…QAVGQQPGAS (88 aa)) is a DNA-binding region (CUT 2). Positions 967–976 (VGQQPGASQA) are enriched in polar residues. Residues 1017 to 1031 (GRSSSSLSGKMYSGS) are compositionally biased toward low complexity. Positions 1038 to 1125 (QEIVAMSPEL…VEKLRDMKKL (88 aa)) form a DNA-binding region, CUT 3. The segment at residues 1168-1227 (IKKPRVVLAPEEKEALRKAYQLEPYPSQQTIELLSFQLNLKTNTVINWFHNYRSRMRREM) is a DNA-binding region (homeobox). A disordered region spans residues 1231 to 1453 (GTQDEPDLDP…ALHPSAKVNP (223 aa)). Over residues 1266–1276 (EDQKPTVKELE) the composition is skewed to basic and acidic residues. Residues 1283 to 1293 (ENSTPLTTQDK) are compositionally biased toward polar residues. The span at 1320–1334 (ELDKGQGPPKEEHPD) shows a compositional bias: basic and acidic residues. The segment covering 1381 to 1401 (KSASESSRCSLEVSLNSPSAA) has biased composition (polar residues). Residues 1402–1420 (SSPGLMMSVSPVPSSSAPI) show a composition bias toward low complexity. A compositionally biased stretch (pro residues) spans 1421–1431 (SPSPPGAPPAK).

This sequence belongs to the CUT homeobox family.

The protein localises to the nucleus. Functionally, transcription factor involved in the control of neuronal proliferation and differentiation in the brain. Regulates dendrite development and branching, dendritic spine formation, and synaptogenesis in cortical layers II-III. Binds to DNA in a sequence-specific manner. This is Homeobox protein cut-like 2 (CUX2) from Homo sapiens (Human).